Here is a 710-residue protein sequence, read N- to C-terminus: E3 ubiquitin-protein ligase TRIM9 (710 aa).

The RING-type zinc-finger motif lies at 10 to 50; the sequence is CPVCGSFYREPIILPCSHNLCQACARNILVQTPESESPQSH. The residue at position 41 (Thr41) is a Phosphothreonine. A phosphoserine mark is found at Ser44, Ser46, and Ser49. B box-type zinc fingers lie at residues 163–212 and 224–266; these read AAAL…LVPP and RKVS…VKAL. Residues Cys168, Cys171, Cys193, His198, Cys229, His232, Cys252, and His258 each coordinate Zn(2+). Positions 273–340 form a coiled coil; that stretch reads HKSQLSQALN…KAQLLARVNK (68 aa). The COS domain maps to 374–432; sequence IKENDPSGFLQISDALIRRVHLTEDQWGKGTLTPRMTTDFDLSLDNSPLLQSIHQLDFV. The Fibronectin type-III domain maps to 440-535; it reads VPATPILQLE…KTLVLQTSEV (96 aa). Positions 533-702 constitute a B30.2/SPRY domain; that stretch reads SEVAWFAFDP…LHTGLPVPDF (170 aa).

The protein belongs to the TRIM/RBCC family. Interacts with SNAP25. Auto-ubiquitinated. Poly-ubiquitinated in cultured cells, whereas it is monoubiquitinated in vitro. Brain. Highly expressed in the cerebral cortex (at protein level). Severely decreased in the affected brain areas in Parkinson disease and dementia with Lewy bodies.

The protein localises to the cytoplasm. It localises to the cell projection. It is found in the dendrite. Its subcellular location is the cytoplasmic vesicle. The protein resides in the secretory vesicle. The protein localises to the synaptic vesicle. It localises to the synapse. It is found in the cytoskeleton. It catalyses the reaction S-ubiquitinyl-[E2 ubiquitin-conjugating enzyme]-L-cysteine + [acceptor protein]-L-lysine = [E2 ubiquitin-conjugating enzyme]-L-cysteine + N(6)-ubiquitinyl-[acceptor protein]-L-lysine.. Its pathway is protein modification; protein ubiquitination. E3 ubiquitin-protein ligase which ubiquitinates itself in cooperation with an E2 enzyme UBE2D2/UBC4 and serves as a targeting signal for proteasomal degradation. May play a role in regulation of neuronal functions and may also participate in the formation or breakdown of abnormal inclusions in neurodegenerative disorders. May act as a regulator of synaptic vesicle exocytosis by controlling the availability of SNAP25 for the SNARE complex formation. This Homo sapiens (Human) protein is E3 ubiquitin-protein ligase TRIM9 (TRIM9).